A 170-amino-acid chain; its full sequence is MHVFYAVIDNTIDLECLTLHKGVEYGCKLQLISKNTKTVNIKCITEVYYSDHLLKPLMAYVNDKLIQLDRKKLRHKIVYSIDLTLYDEVTNMLVCSNMDPDLIDRYYAKICLDFDNNVYTVKDKNYTNAVIEYPVVCNFRRYSESDSDSDVDDRAELHKRNNDSDSDDYT.

Residues 145–170 (SDSDSDVDDRAELHKRNNDSDSDDYT) form a disordered region. Residues 152–163 (DDRAELHKRNND) are compositionally biased toward basic and acidic residues.

The protein belongs to the poxviridae C7 protein family.

Its function is as follows. Plays a role for multiplication of the virus in different cell types. The chain is Probable host range protein 2 from Bos taurus (Bovine).